The primary structure comprises 350 residues: Transmembrane protein 115 (350 aa).

The Cytoplasmic portion of the chain corresponds to 1–19 (MQRALPGARQHLGAILASA). The tract at residues 1 to 205 (MQRALPGARQ…FGLLSSWVYL (205 aa)) is mediates homooligomerization. A helical transmembrane segment spans residues 20–40 (SVVVKALCAVVLFLYLLSFAV). Topologically, residues 41-97 (DTGCLAVTPGYLFPPNFWIWTLATHGLMEQHVWDVAISLATVVVAGRLLEPLWGALE) are lumenal. Residues 98–118 (LLIFFSVVNVSVGLLGALAYL) traverse the membrane as a helical segment. The Cytoplasmic portion of the chain corresponds to 119–126 (LTYMASFN). Residues 127–147 (LVYLFTIRIHGALGFLGGVLV) form a helical membrane-spanning segment. The Lumenal segment spans residues 148-165 (ALKQTMGDCVVLRVPQVR). The chain crosses the membrane as a helical span at residues 166–186 (VSVVPMLLLALLLLLRLATLL). The Cytoplasmic portion of the chain corresponds to 187–350 (QSPALASYGF…LITLETAPLL (164 aa)). Positions 206–229 (RFYQRHSRGRGDMADHFAFATFFP) are mediates localization to the Golgi. The tract at residues 299 to 350 (EDQSAWPSMDDDEEEAGAKTDSPLPLEEASTPPGKVTVPESSLITLETAPLL) is disordered. Thr329 bears the Phosphothreonine mark.

It belongs to the TMEM115 family. In terms of assembly, homooligomer. Interacts with COPB1. May interact with LMAN1. Interacts with the COG complex; probably through COG3.

It localises to the golgi apparatus. The protein localises to the golgi stack membrane. May play a role in retrograde transport of proteins from the Golgi to the endoplasmic reticulum. May indirectly play a role in protein glycosylation in the Golgi. This is Transmembrane protein 115 from Mus musculus (Mouse).